Consider the following 324-residue polypeptide: Beta-ketoacyl-[acyl-carrier-protein] synthase III (324 aa).

Residues C116 and H251 contribute to the active site. Residues 252–256 are ACP-binding; the sequence is QANLR. N281 is a catalytic residue.

Belongs to the thiolase-like superfamily. FabH family. Homodimer.

Its subcellular location is the cytoplasm. The catalysed reaction is malonyl-[ACP] + acetyl-CoA + H(+) = 3-oxobutanoyl-[ACP] + CO2 + CoA. It participates in lipid metabolism; fatty acid biosynthesis. In terms of biological role, catalyzes the condensation reaction of fatty acid synthesis by the addition to an acyl acceptor of two carbons from malonyl-ACP. Catalyzes the first condensation reaction which initiates fatty acid synthesis and may therefore play a role in governing the total rate of fatty acid production. Possesses both acetoacetyl-ACP synthase and acetyl transacylase activities. Its substrate specificity determines the biosynthesis of branched-chain and/or straight-chain of fatty acids. The sequence is that of Beta-ketoacyl-[acyl-carrier-protein] synthase III from Xylella fastidiosa (strain 9a5c).